A 148-amino-acid chain; its full sequence is Large ribosomal subunit protein bL9 (148 aa).

Belongs to the bacterial ribosomal protein bL9 family.

Its function is as follows. Binds to the 23S rRNA. This Geobacter metallireducens (strain ATCC 53774 / DSM 7210 / GS-15) protein is Large ribosomal subunit protein bL9.